We begin with the raw amino-acid sequence, 385 residues long: uncharacterized protein (385 aa).

The protein belongs to the phage portal family. HK97 subfamily.

This is an uncharacterized protein from Rickettsia bellii (strain RML369-C).